We begin with the raw amino-acid sequence, 318 residues long: NADH-ubiquinone oxidoreductase chain 1 (318 aa).

Helical transmembrane passes span 2–22 (FMIN…FLTL), 70–90 (MFIL…IPLP), 100–120 (LGVL…LWSG), 147–167 (AIIL…TLII), 172–192 (TWLI…TLAE), 222–242 (LFFM…AILF), 253–273 (ELYT…FLWI), and 294–314 (LPLT…TSGI).

Belongs to the complex I subunit 1 family. As to quaternary structure, core subunit of respiratory chain NADH dehydrogenase (Complex I) which is composed of 45 different subunits.

Its subcellular location is the mitochondrion inner membrane. The enzyme catalyses a ubiquinone + NADH + 5 H(+)(in) = a ubiquinol + NAD(+) + 4 H(+)(out). Core subunit of the mitochondrial membrane respiratory chain NADH dehydrogenase (Complex I) which catalyzes electron transfer from NADH through the respiratory chain, using ubiquinone as an electron acceptor. Essential for the catalytic activity and assembly of complex I. The sequence is that of NADH-ubiquinone oxidoreductase chain 1 (MT-ND1) from Bos mutus grunniens (Wild yak).